The following is a 214-amino-acid chain: MSDERREGLAPEIEATGLVPMVVEQSARGERAYDIYSRLLKERVIFLVGPVEDHMANLIVAQLLFLESENPDKDIHIYINSPGGAVTAGLAIYDTMQFIKPDVSTVCIGQAASMGALLLTGGTKGKRYALPNSRMMIHQPLGGFQGQATDVDIHAREILDMRDRLNRIMAHHTGQDMETIARDTDRDNFMSPDTACEYGLVDAVLADRKALDQA.

Ser113 serves as the catalytic Nucleophile. His138 is an active-site residue.

The protein belongs to the peptidase S14 family. In terms of assembly, fourteen ClpP subunits assemble into 2 heptameric rings which stack back to back to give a disk-like structure with a central cavity, resembling the structure of eukaryotic proteasomes.

The protein resides in the cytoplasm. It carries out the reaction Hydrolysis of proteins to small peptides in the presence of ATP and magnesium. alpha-casein is the usual test substrate. In the absence of ATP, only oligopeptides shorter than five residues are hydrolyzed (such as succinyl-Leu-Tyr-|-NHMec, and Leu-Tyr-Leu-|-Tyr-Trp, in which cleavage of the -Tyr-|-Leu- and -Tyr-|-Trp bonds also occurs).. Functionally, cleaves peptides in various proteins in a process that requires ATP hydrolysis. Has a chymotrypsin-like activity. Plays a major role in the degradation of misfolded proteins. This is ATP-dependent Clp protease proteolytic subunit from Alkalilimnicola ehrlichii (strain ATCC BAA-1101 / DSM 17681 / MLHE-1).